The sequence spans 122 residues: Protein NIM1-INTERACTING 2 (122 aa).

Residues 1 to 22 show a composition bias toward basic and acidic residues; the sequence is MNNSLKKEERVEEDNGKSDGNR. The interval 1-28 is disordered; it reads MNNSLKKEERVEEDNGKSDGNRGKPSTE. The interval 39-45 is involved in NPR1/NIM1 interaction; that stretch reads DEFFKIL. The Nuclear localization signal signature appears at 70 to 74; the sequence is KKRKR.

In terms of assembly, interacts with NPR1 N-terminal region.

The protein resides in the nucleus. This is Protein NIM1-INTERACTING 2 from Arabidopsis thaliana (Mouse-ear cress).